Consider the following 182-residue polypeptide: Putative manganese efflux pump MntP (182 aa).

Transmembrane regions (helical) follow at residues 6 to 26, 37 to 57, 71 to 91, 101 to 121, 131 to 151, and 162 to 182; these read LIPL…VSLG, ILYI…IGMV, HFAG…SSIL, IGIS…SVGL, IITI…GLFI, and YGEI…LFPI.

This sequence belongs to the MntP (TC 9.B.29) family.

The protein localises to the cell membrane. Its function is as follows. Probably functions as a manganese efflux pump. This Bacillus thuringiensis subsp. konkukian (strain 97-27) protein is Putative manganese efflux pump MntP.